We begin with the raw amino-acid sequence, 663 residues long: MVVNSQAFLLALIALLATQLPSLMAADCPLDFSGSNFTLVATVCSNITNRGKCCRYMNAFVAVSVARYANLSTNLGVTSDLSETCIASISRAMEGYGVSRNATSFCGLGTKILVKYDCDGRTTVTQMHQSPGFGHVSRNCRLPFSPGHQCRKCLNSGITYLRNLIGAETNNITLCTCRDATYATLASRIDDTSALELLSCFFQVTELNIPSESFSPVASPEPSPSTVGGISPSNSDSQMTTSRSTNPYHLTMVPTIGIVVTAVALTMLVVLVILIRRKNRELDESESLDRKSTKSVPSSLPVFKIHEDDSSSAFRKFSYKEMTNATNDFNTVIGQGGFGTVYKAEFNDGLIAAVKKMNKVSEQAEQDFCREIGLLAKLHHRNLVALKGFCINKKERFLVYDYMKNGSLKDHLHAIGKPPPSWGTRMKIAIDVANALEYLHFYCDPPLCHRDIKSSNILLDENFVAKLSDFGLAHSSRDGSVCFEPVNTDIRGTPGYVDPEYVVTQELTEKSDVYSYGVVLLELITGRRAVDEGRNLVEMSQRFLLAKSKHLELVDPRIKDSINDAGGKQLDAVVTVVRLCTEKEGRSRPSIKQVLRLLCESCDPVHSAFAKAVEEEIGWDSRKRSNLRIQRGDSRIFGPSSSTTSRSHYSRSLPHSPINGFSF.

Positions 1–25 (MVVNSQAFLLALIALLATQLPSLMA) are cleaved as a signal peptide. Residues 26-254 (ADCPLDFSGS…TNPYHLTMVP (229 aa)) lie on the Extracellular side of the membrane. Asparagine 36, asparagine 46, asparagine 70, asparagine 101, and asparagine 171 each carry an N-linked (GlcNAc...) asparagine glycan. Residues 213 to 243 (SFSPVASPEPSPSTVGGISPSNSDSQMTTSR) are disordered. The span at 224-243 (PSTVGGISPSNSDSQMTTSR) shows a compositional bias: polar residues. The chain crosses the membrane as a helical span at residues 255 to 275 (TIGIVVTAVALTMLVVLVILI). The Cytoplasmic portion of the chain corresponds to 276–663 (RRKNRELDES…PHSPINGFSF (388 aa)). Residues 327 to 609 (NDFNTVIGQG…ESCDPVHSAF (283 aa)) form the Protein kinase domain. Residues 333-341 (IGQGGFGTV) and lysine 355 each bind ATP. Aspartate 451 functions as the Proton acceptor in the catalytic mechanism. The disordered stretch occupies residues 631–663 (RGDSRIFGPSSSTTSRSHYSRSLPHSPINGFSF). Over residues 640 to 652 (SSSTTSRSHYSRS) the composition is skewed to low complexity.

It belongs to the protein kinase superfamily. Ser/Thr protein kinase family.

It localises to the cell membrane. The catalysed reaction is L-seryl-[protein] + ATP = O-phospho-L-seryl-[protein] + ADP + H(+). It catalyses the reaction L-threonyl-[protein] + ATP = O-phospho-L-threonyl-[protein] + ADP + H(+). This chain is Probable receptor-like protein kinase At1g49730, found in Arabidopsis thaliana (Mouse-ear cress).